We begin with the raw amino-acid sequence, 104 residues long: Thioredoxin (104 aa).

The 103-residue stretch at 2 to 104 (KQVSDASFEE…KLFEWVEASV (103 aa)) folds into the Thioredoxin domain. Residues Cys-29 and Cys-32 are joined by a disulfide bond.

It belongs to the thioredoxin family.

In terms of biological role, participates in various redox reactions through the reversible oxidation of its active center dithiol to a disulfide and catalyzes dithiol-disulfide exchange reactions. This Rhodospirillum rubrum protein is Thioredoxin (trxA).